We begin with the raw amino-acid sequence, 274 residues long: Dermonecrotic toxin SdSicTox-betaIIB2i (274 aa).

Histidine 5 is a catalytic residue. Mg(2+)-binding residues include glutamate 25 and aspartate 27. Catalysis depends on histidine 41, which acts as the Nucleophile. 2 cysteine pairs are disulfide-bonded: cysteine 45–cysteine 51 and cysteine 47–cysteine 190. A Mg(2+)-binding site is contributed by aspartate 85.

It belongs to the arthropod phospholipase D family. Class II subfamily. The cofactor is Mg(2+). Expressed by the venom gland.

The protein localises to the secreted. The catalysed reaction is an N-(acyl)-sphingosylphosphocholine = an N-(acyl)-sphingosyl-1,3-cyclic phosphate + choline. It carries out the reaction an N-(acyl)-sphingosylphosphoethanolamine = an N-(acyl)-sphingosyl-1,3-cyclic phosphate + ethanolamine. The enzyme catalyses a 1-acyl-sn-glycero-3-phosphocholine = a 1-acyl-sn-glycero-2,3-cyclic phosphate + choline. It catalyses the reaction a 1-acyl-sn-glycero-3-phosphoethanolamine = a 1-acyl-sn-glycero-2,3-cyclic phosphate + ethanolamine. In terms of biological role, dermonecrotic toxins cleave the phosphodiester linkage between the phosphate and headgroup of certain phospholipids (sphingolipid and lysolipid substrates), forming an alcohol (often choline) and a cyclic phosphate. This toxin acts on sphingomyelin (SM). It may also act on ceramide phosphoethanolamine (CPE), lysophosphatidylcholine (LPC) and lysophosphatidylethanolamine (LPE), but not on lysophosphatidylserine (LPS), and lysophosphatidylglycerol (LPG). It acts by transphosphatidylation, releasing exclusively cyclic phosphate products as second products. Induces dermonecrosis, hemolysis, increased vascular permeability, edema, inflammatory response, and platelet aggregation. The sequence is that of Dermonecrotic toxin SdSicTox-betaIIB2i from Sicarius cf. damarensis (strain GJB-2008) (Six-eyed sand spider).